The primary structure comprises 360 residues: A-type ATP synthase subunit C (360 aa).

A disordered region spans residues 1–23 (MRLLERLWGKKPSRKSDKKKKGT). A compositionally biased stretch (basic residues) spans 9-22 (GKKPSRKSDKKKKG).

Belongs to the V-ATPase V0D/AC39 subunit family. As to quaternary structure, has multiple subunits with at least A(3), B(3), C, D, E, F, H, I and proteolipid K(x).

Its subcellular location is the cell membrane. Component of the A-type ATP synthase that produces ATP from ADP in the presence of a proton gradient across the membrane. The polypeptide is A-type ATP synthase subunit C (Methanosarcina acetivorans (strain ATCC 35395 / DSM 2834 / JCM 12185 / C2A)).